Here is a 214-residue protein sequence, read N- to C-terminus: Large ribosomal subunit protein bL25 (214 aa).

The disordered stretch occupies residues 194–214 (TTEAEETAEPEVIRRKEEEEE). Over residues 204–214 (EVIRRKEEEEE) the composition is skewed to basic and acidic residues.

This sequence belongs to the bacterial ribosomal protein bL25 family. CTC subfamily. As to quaternary structure, part of the 50S ribosomal subunit; part of the 5S rRNA/L5/L18/L25 subcomplex. Contacts the 5S rRNA. Binds to the 5S rRNA independently of L5 and L18.

In terms of biological role, this is one of the proteins that binds to the 5S RNA in the ribosome where it forms part of the central protuberance. The protein is Large ribosomal subunit protein bL25 of Thermotoga petrophila (strain ATCC BAA-488 / DSM 13995 / JCM 10881 / RKU-1).